The chain runs to 970 residues: Protein bicaudal C homolog 1-B (970 aa).

Residues Met1–Arg50 are disordered. Residues Met9 to Glu19 are compositionally biased toward polar residues. Positions His40–Arg50 are enriched in basic and acidic residues. 2 consecutive KH domains span residues Arg130–Ile197 and Pro282–Leu346. The segment covering Glu596 to Ser605 has biased composition (polar residues). Disordered regions lie at residues Glu596–Thr638, Ser677–Ser696, and Arg773–Ala841. Residues Ser606–Ser616 show a composition bias toward basic and acidic residues. Polar residues-rich tracts occupy residues Thr783–Ser810 and Ile819–Gly831. The 64-residue stretch at Phe869–Asn932 folds into the SAM domain.

Belongs to the BicC family.

In terms of biological role, putative RNA-binding protein. May be involved in regulating gene expression during embryonic development. Seems to be involved in endoderm formation. Ectopic expression results in endoderm formation in the absence of mesoderm induction. This chain is Protein bicaudal C homolog 1-B (bicc1-b), found in Xenopus laevis (African clawed frog).